Consider the following 95-residue polypeptide: ATP-dependent Clp protease adapter protein ClpS (95 aa).

It belongs to the ClpS family. Binds to the N-terminal domain of the chaperone ClpA.

Involved in the modulation of the specificity of the ClpAP-mediated ATP-dependent protein degradation. The chain is ATP-dependent Clp protease adapter protein ClpS from Synechococcus elongatus (strain ATCC 33912 / PCC 7942 / FACHB-805) (Anacystis nidulans R2).